The chain runs to 206 residues: Protein sym1 (206 aa).

The next 2 helical transmembrane spans lie at 107–127 (VLLD…SWMT) and 169–189 (LQYQ…FLSL).

Belongs to the peroxisomal membrane protein PXMP2/4 family.

It is found in the mitochondrion inner membrane. This Schizosaccharomyces pombe (strain 972 / ATCC 24843) (Fission yeast) protein is Protein sym1 (sym1).